A 360-amino-acid polypeptide reads, in one-letter code: MKALILVGGYGTRLRPLTLSVPKPLVDFCNKPILLHQVEALVKAGVNHVILAVSYMSDMLEKEMKEQEKRLGIRISMSHEKEPLGTAGPLALARELLTENSDPFFVLNSDVICDFPFEEMVRFHKHHGKEGTIVVTKVEEPSKYGVVVYEAESGQIQRFVEKPQVFVSNKINSGLYIFSPAVLDRIQLRPTSIEKEIFPAMAQEGQLFAMELQGFWMDIGQPKDFLTGMCMYLQSVRQKHPEWLHVGPGFIGNVLVDPTAKIGQNCSIGPNVTIGPGVTVEDGVRIKRCTIMKGSRLHSHSWLESSIVGWSSSVGQWVRMENVTVLGEDVIVNDELYLNGANVLPHKCISESVPEPRIIM.

The segment at 2-222 (KALILVGGYG…QGFWMDIGQP (221 aa)) is substrate-binding domain. Aspartate 110 is a GDP-alpha-D-mannose binding site. A Mg(2+)-binding site is contributed by aspartate 110. Lysine 162 is a catalytic residue. Aspartate 218 contacts GDP-alpha-D-mannose. Aspartate 218 contacts Mg(2+). Residues 245-360 (HVGPGFIGNV…ESVPEPRIIM (116 aa)) form a hexapeptide repeat domain region.

The protein belongs to the transferase hexapeptide repeat family. In terms of assembly, component of the GMPPA-GMPPB mannose-1-phosphate guanylyltransferase complex composed of 4 gmppa subunits and 8 gmppb subunits; the complex is organized into three layers, a central layer made up of 2 gmppa dimers sandwiched between two layers each made up of 2 gmppb dimers. Catalytic activity of gmppb is reduced when part of the complex and binding of GDP-alpha-D-Mannose by gmppa induces allosteric feedback inhibition of gmppb. Mg(2+) is required as a cofactor.

The catalysed reaction is alpha-D-mannose 1-phosphate + GTP + H(+) = GDP-alpha-D-mannose + diphosphate. It participates in nucleotide-sugar biosynthesis; GDP-alpha-D-mannose biosynthesis; GDP-alpha-D-mannose from alpha-D-mannose 1-phosphate (GTP route): step 1/1. Enzyme activity is reduced by incorporation into the GMPPA-GMPPB mannose-1-phosphate guanylyltransferase complex. Allosterically inhibited, when part of the GMPPA-GMPPB complex, by GDP-alpha-D-mannose binding to GMPPA. Its function is as follows. Catalytic subunit of the GMPPA-GMPPB mannose-1-phosphate guanylyltransferase complex. Catalyzes the formation of GDP-mannose, an essential precursor of glycan moieties of glycoproteins and glycolipids. Can catalyze the reverse reaction in vitro. Together with GMPPA regulates GDP-alpha-D-mannose levels. This chain is Mannose-1-phosphate guanylyltransferase catalytic subunit beta (gmppb), found in Xenopus tropicalis (Western clawed frog).